A 1361-amino-acid polypeptide reads, in one-letter code: DNA-directed RNA polymerase subunit beta (1361 aa).

It belongs to the RNA polymerase beta chain family. The RNAP catalytic core consists of 2 alpha, 1 beta, 1 beta' and 1 omega subunit. When a sigma factor is associated with the core the holoenzyme is formed, which can initiate transcription.

It catalyses the reaction RNA(n) + a ribonucleoside 5'-triphosphate = RNA(n+1) + diphosphate. DNA-dependent RNA polymerase catalyzes the transcription of DNA into RNA using the four ribonucleoside triphosphates as substrates. The sequence is that of DNA-directed RNA polymerase subunit beta from Cellvibrio japonicus (strain Ueda107) (Pseudomonas fluorescens subsp. cellulosa).